The primary structure comprises 354 residues: Multiple sugar-binding periplasmic receptor ChvE (354 aa).

Positions 1–25 (MKSIISLTAAAAIGVAMFVAPAFAA) are cleaved as a signal peptide.

The protein belongs to the bacterial solute-binding protein 2 family.

The protein resides in the periplasm. Functionally, required for effective transcriptional induction of the vir genes by monosaccharides in response to plant signals and for normal growth and chemotaxis towards certain sugars. Functions as a periplasmic multiple sugar-binding receptor protein. It does not interact with a transport system. The protein is Multiple sugar-binding periplasmic receptor ChvE (chvE) of Rhizobium radiobacter (Agrobacterium tumefaciens).